Here is a 1137-residue protein sequence, read N- to C-terminus: Nonsense-mediated mRNA decay factor SMG7 (1137 aa).

Serine 2 carries the N-acetylserine modification. TPR repeat units lie at residues 152-185 (QHCL…VPSN) and 187-219 (QPYN…KFPF). Serine 520 is subject to Phosphoserine. Over residues 620 to 631 (ELRKTPVSEARK) the composition is skewed to basic and acidic residues. Disordered stretches follow at residues 620 to 646 (ELRK…NSQF), 696 to 794 (LQPT…YQQA), 890 to 911 (IDRR…VPRM), 988 to 1055 (PSLP…AMGG), 1069 to 1089 (SSWH…PSME), and 1104 to 1137 (SSSM…NPPH). Position 624 is a phosphothreonine (threonine 624). Polar residues-rich tracts occupy residues 633–646 (PVTQ…NSQF) and 696–722 (LQPT…SQQR). Low complexity predominate over residues 723-770 (PSGPGPMNQGPQQSQPPSQQPLTSLPAQPTAQSTSQLQVQALTQQQQS). A phosphoserine mark is found at serine 781 and serine 897. Residues 988-998 (PSLPASSDHST) show a composition bias toward polar residues. Residues 999 to 1025 (PASQSPHSSNPSSLPSSPPTHNHNSVP) are compositionally biased toward low complexity. Residues 1036 to 1050 (DNRDRRTADRWKTDK) are compositionally biased toward basic and acidic residues. Over residues 1069 to 1081 (SSWHQASTPSGTW) the composition is skewed to polar residues. Over residues 1117-1131 (QLLMQQKQKQQRGQG) the composition is skewed to low complexity.

Part of a complex that contains SMG5, SMG7, PPP2CA, a short isoform of UPF3A (isoform UPF3AS, but not isoform UPF3AL) and phosphorylated UPF1. Interacts with DHX34; the interaction is RNA-independent.

It is found in the cytoplasm. Its subcellular location is the nucleus. Functionally, plays a role in nonsense-mediated mRNA decay. Recruits UPF1 to cytoplasmic mRNA decay bodies. Together with SMG5 is thought to provide a link to the mRNA degradation machinery involving exonucleolytic pathways, and to serve as an adapter for UPF1 to protein phosphatase 2A (PP2A), thereby triggering UPF1 dephosphorylation. This chain is Nonsense-mediated mRNA decay factor SMG7, found in Homo sapiens (Human).